Consider the following 345-residue polypeptide: NADH-ubiquinone oxidoreductase chain 2 (345 aa).

9 helical membrane-spanning segments follow: residues 1 to 21, 25 to 45, 60 to 80, 113 to 133, 148 to 168, 191 to 211, 239 to 259, 274 to 294, and 324 to 344; these read MNPI…ILAM, HWVY…PIIS, FLIQ…NAYL, FWLP…IATW, LIPT…GGLG, VIII…YMIF, IITS…PMSG, HLTP…MFYL, and SSLS…PLLI.

This sequence belongs to the complex I subunit 2 family.

The protein localises to the mitochondrion inner membrane. It catalyses the reaction a ubiquinone + NADH + 5 H(+)(in) = a ubiquinol + NAD(+) + 4 H(+)(out). Core subunit of the mitochondrial membrane respiratory chain NADH dehydrogenase (Complex I) that is believed to belong to the minimal assembly required for catalysis. Complex I functions in the transfer of electrons from NADH to the respiratory chain. The immediate electron acceptor for the enzyme is believed to be ubiquinone. This Varanus baritji (Black-spotted ridge-tailed monitor) protein is NADH-ubiquinone oxidoreductase chain 2 (MT-ND2).